The primary structure comprises 301 residues: Phosphonates import ATP-binding protein PhnC (301 aa).

The ABC transporter domain occupies 8 to 256 (IRIERLSKTF…LLKTLYGDEA (249 aa)). An ATP-binding site is contributed by 41–48 (GASGSGKS). The interval 264-287 (AQGPDDTESKNTADNTPLQDAAPA) is disordered.

Belongs to the ABC transporter superfamily. Phosphonates importer (TC 3.A.1.9.1) family. The complex is composed of two ATP-binding proteins (PhnC), two transmembrane proteins (PhnE) and a solute-binding protein (PhnD).

The protein localises to the cell inner membrane. It carries out the reaction phosphonate(out) + ATP + H2O = phosphonate(in) + ADP + phosphate + H(+). In terms of biological role, part of the ABC transporter complex PhnCDE involved in phosphonates import. Responsible for energy coupling to the transport system. The polypeptide is Phosphonates import ATP-binding protein PhnC (Paraburkholderia xenovorans (strain LB400)).